We begin with the raw amino-acid sequence, 221 residues long: MQAFAVAALSIWLCLGATTLAESLAQSHGPQHCTSPNMTGVLTVMALNGGEIKATGHYHYDTTDKKLRFTESDMHLNKSEHLEDYLMLFEEGVFYDIDLKNQSCRKMSLQSHAHALELPAGAVHQVELFLGSDTVQEENIKVNIWMGSVPETKGQYSVSTTVGDCLPLSTFYSTDSITLLFSNSQVVTEVKEPEVFSLPSFCEGLELEDTHNDFFSIFNTV.

The signal sequence occupies residues 1-21 (MQAFAVAALSIWLCLGATTLA). 3 N-linked (GlcNAc...) asparagine glycosylation sites follow: Asn37, Asn77, and Asn101.

Belongs to the ependymin family. In terms of assembly, forms disulfide-linked dimers. Post-translationally, binds calcium through the terminal sialic acids. EPDs are synthesized in the meninx and secreted in the cerebrospinal fluid.

Its subcellular location is the secreted. May play a role in neural plasticity. May be involved during axon regeneration. The chain is Ependymin (epd) from Esox lucius (Northern pike).